The primary structure comprises 48 residues: Large ribosomal subunit protein bL32 (48 aa).

A disordered region spans residues V28 to Y48.

Belongs to the bacterial ribosomal protein bL32 family.

The chain is Large ribosomal subunit protein bL32 from Campylobacter concisus (strain 13826).